The following is a 72-amino-acid chain: Translation initiation factor IF-1 (72 aa).

The S1-like domain occupies 1–72; that stretch reads MAKEENIEMQ…SKGRIIFRAR (72 aa).

It belongs to the IF-1 family. Component of the 30S ribosomal translation pre-initiation complex which assembles on the 30S ribosome in the order IF-2 and IF-3, IF-1 and N-formylmethionyl-tRNA(fMet); mRNA recruitment can occur at any time during PIC assembly.

The protein resides in the cytoplasm. Functionally, one of the essential components for the initiation of protein synthesis. Stabilizes the binding of IF-2 and IF-3 on the 30S subunit to which N-formylmethionyl-tRNA(fMet) subsequently binds. Helps modulate mRNA selection, yielding the 30S pre-initiation complex (PIC). Upon addition of the 50S ribosomal subunit IF-1, IF-2 and IF-3 are released leaving the mature 70S translation initiation complex. The protein is Translation initiation factor IF-1 of Colwellia psychrerythraea (strain 34H / ATCC BAA-681) (Vibrio psychroerythus).